The primary structure comprises 477 residues: Glycogen synthase (477 aa).

Lysine 15 is a binding site for ADP-alpha-D-glucose.

Belongs to the glycosyltransferase 1 family. Bacterial/plant glycogen synthase subfamily.

It catalyses the reaction [(1-&gt;4)-alpha-D-glucosyl](n) + ADP-alpha-D-glucose = [(1-&gt;4)-alpha-D-glucosyl](n+1) + ADP + H(+). It functions in the pathway glycan biosynthesis; glycogen biosynthesis. Functionally, synthesizes alpha-1,4-glucan chains using ADP-glucose. The protein is Glycogen synthase of Shigella boydii serotype 18 (strain CDC 3083-94 / BS512).